A 249-amino-acid chain; its full sequence is 2,3-bisphosphoglycerate-dependent phosphoglycerate mutase (249 aa).

Residues 8-15 (RHGQSVWN), 21-22 (TG), arginine 60, 87-90 (ERHY), lysine 98, 114-115 (RR), and 183-184 (GN) each bind substrate. Residue histidine 9 is the Tele-phosphohistidine intermediate of the active site. The active-site Proton donor/acceptor is the glutamate 87.

This sequence belongs to the phosphoglycerate mutase family. BPG-dependent PGAM subfamily. As to quaternary structure, homodimer.

The catalysed reaction is (2R)-2-phosphoglycerate = (2R)-3-phosphoglycerate. It participates in carbohydrate degradation; glycolysis; pyruvate from D-glyceraldehyde 3-phosphate: step 3/5. Catalyzes the interconversion of 2-phosphoglycerate and 3-phosphoglycerate. The chain is 2,3-bisphosphoglycerate-dependent phosphoglycerate mutase from Solidesulfovibrio magneticus (strain ATCC 700980 / DSM 13731 / RS-1) (Desulfovibrio magneticus).